A 127-amino-acid chain; its full sequence is Large ribosomal subunit protein bL17 (127 aa).

The protein belongs to the bacterial ribosomal protein bL17 family. In terms of assembly, part of the 50S ribosomal subunit. Contacts protein L32.

This Alcanivorax borkumensis (strain ATCC 700651 / DSM 11573 / NCIMB 13689 / SK2) protein is Large ribosomal subunit protein bL17.